Consider the following 414-residue polypeptide: 2,3-bisphosphoglycerate-independent phosphoglycerate mutase (414 aa).

The protein belongs to the BPG-independent phosphoglycerate mutase family. A-PGAM subfamily.

It carries out the reaction (2R)-2-phosphoglycerate = (2R)-3-phosphoglycerate. It participates in carbohydrate degradation; glycolysis; pyruvate from D-glyceraldehyde 3-phosphate: step 3/5. Its function is as follows. Catalyzes the interconversion of 2-phosphoglycerate and 3-phosphoglycerate. This Saccharolobus solfataricus (strain ATCC 35092 / DSM 1617 / JCM 11322 / P2) (Sulfolobus solfataricus) protein is 2,3-bisphosphoglycerate-independent phosphoglycerate mutase.